The following is a 210-amino-acid chain: NADH dehydrogenase [ubiquinone] iron-sulfur protein 8, mitochondrial (210 aa).

The N-terminal 34 residues, 1-34 (MRCLTTPMLLRALAQAARAGPPCGRSLHSSAVAA), are a transit peptide targeting the mitochondrion. 4Fe-4S ferredoxin-type domains are found at residues 102-131 (RRYPSGEERCIACKLCEAICPAQAITIEAE) and 141-170 (TRYDIDMTKCIYCGFCQEACPVDAIVEGPN). Residues Cys-111, Cys-114, Cys-117, Cys-121, Cys-150, Cys-153, Cys-156, and Cys-160 each contribute to the [4Fe-4S] cluster site.

This sequence belongs to the complex I 23 kDa subunit family. Core subunit of respiratory chain NADH dehydrogenase (Complex I) which is composed of 45 different subunits. This is a component of the iron-sulfur (IP) fragment of the enzyme. Interacts with RAB5IF. It depends on [4Fe-4S] cluster as a cofactor.

It is found in the mitochondrion inner membrane. It catalyses the reaction a ubiquinone + NADH + 5 H(+)(in) = a ubiquinol + NAD(+) + 4 H(+)(out). In terms of biological role, core subunit of the mitochondrial membrane respiratory chain NADH dehydrogenase (Complex I) which catalyzes electron transfer from NADH through the respiratory chain, using ubiquinone as an electron acceptor. Essential for the catalytic activity and assembly of complex I. The polypeptide is NADH dehydrogenase [ubiquinone] iron-sulfur protein 8, mitochondrial (NDUFS8) (Pongo abelii (Sumatran orangutan)).